We begin with the raw amino-acid sequence, 749 residues long: NAD(P)H-quinone oxidoreductase subunit 5, chloroplastic (749 aa).

16 helical membrane-spanning segments follow: residues 9–29 (WIIPFLPLPIPMLLGVGLLLF), 40–60 (WSFTSVLLLSIVMTFSVNLSI), 89–109 (IDPLTSIMSILITTVGIMVLI), 125–145 (FAYMSFFNASMLGLVTSSNLI), 147–167 (IYIFWELVGMCSYLLIGFWFT), 185–205 (GDFGLLLGILGLYWITGSFEF), 221–241 (NGTNFLFVSLCALFLFVGAVA), 260–280 (TPISALIHAATMVAAGIFLVA), 285–305 (LFIVIPYIMNLISLIGIITIL), 329–349 (LGYTMLALGMGSYRAALFHLI), 356–376 (ALLFLGSGSIIHSMEAIVGYS), 398–418 (NTFLLGTLSLCGIPPLACFWS), 427–447 (WLYSPIFAIIACLTAGLTAFY), 553–573 (LFPLFALALFTLFVGAIGIPF), 607–627 (FVINAIFSVSISYFGIFLASL), and 727–747 (SYLFLYLSSVSILLLISYFFL).

The protein belongs to the complex I subunit 5 family. As to quaternary structure, NDH is composed of at least 16 different subunits, 5 of which are encoded in the nucleus.

It is found in the plastid. Its subcellular location is the chloroplast thylakoid membrane. The catalysed reaction is a plastoquinone + NADH + (n+1) H(+)(in) = a plastoquinol + NAD(+) + n H(+)(out). It carries out the reaction a plastoquinone + NADPH + (n+1) H(+)(in) = a plastoquinol + NADP(+) + n H(+)(out). In terms of biological role, NDH shuttles electrons from NAD(P)H:plastoquinone, via FMN and iron-sulfur (Fe-S) centers, to quinones in the photosynthetic chain and possibly in a chloroplast respiratory chain. The immediate electron acceptor for the enzyme in this species is believed to be plastoquinone. Couples the redox reaction to proton translocation, and thus conserves the redox energy in a proton gradient. The chain is NAD(P)H-quinone oxidoreductase subunit 5, chloroplastic (ndhF) from Vitis vinifera (Grape).